Reading from the N-terminus, the 215-residue chain is Ribonuclease T (215 aa).

The region spanning 20 to 194 (VVIDVETAGF…YDTMQTAKLF (175 aa)) is the Exonuclease domain. Aspartate 23, glutamate 25, histidine 181, and aspartate 186 together coordinate Mg(2+). The active-site Proton donor/acceptor is histidine 181.

This sequence belongs to the RNase T family. In terms of assembly, homodimer. It depends on Mg(2+) as a cofactor.

In terms of biological role, trims short 3' overhangs of a variety of RNA species, leaving a one or two nucleotide 3' overhang. Responsible for the end-turnover of tRNA: specifically removes the terminal AMP residue from uncharged tRNA (tRNA-C-C-A). Also appears to be involved in tRNA biosynthesis. This Yersinia enterocolitica serotype O:8 / biotype 1B (strain NCTC 13174 / 8081) protein is Ribonuclease T.